Here is a 621-residue protein sequence, read N- to C-terminus: DnaJ homolog subfamily C member 2 (621 aa).

M1 is subject to N-acetylmethionine. A phosphoserine mark is found at S47, S49, S60, and S63. The region spanning 88–161 is the J domain; that stretch reads DHYAVLGLGH…VKRRAFNSVD (74 aa). A ZRF1-UBD region spans residues 160-250; sequence VDPTFDNSVP…RDERRWIEKQ (91 aa). Position 183 is a phosphoserine (S183). Disordered stretches follow at residues 294–315 and 427–453; these read EKKAKAEAKRKEQEAKEKQRQA and EEAEAHMRQASKNTEKSAGGGGNGSKN. 2 consecutive SANT domains span residues 449 to 511 and 549 to 604; these read NGSK…KLDP and TDFT…EMVK.

In terms of assembly, component of ribosome-associated complex (RAC), a heterodimer composed of Hsp70/DnaK-type chaperone HSPA14 and Hsp40/DnaJ-type chaperone DNAJC2. Interacts (via ZRF1-UBD region) with ID1. Post-translationally, phosphorylated in M (mitotic) phase.

The protein resides in the nucleus. The protein localises to the cytoplasm. It is found in the cytosol. Functionally, acts both as a chaperone in the cytosol and as a chromatin regulator in the nucleus. When cytosolic, acts as a molecular chaperone: component of the ribosome-associated complex (RAC), a complex involved in folding or maintaining nascent polypeptides in a folding-competent state. In the RAC complex, stimulates the ATPase activity of the ribosome-associated pool of Hsp70-type chaperones HSPA14 that bind to the nascent polypeptide chain. When nuclear, mediates the switching from polycomb-repressed genes to an active state: specifically recruited at histone H2A ubiquitinated at 'Lys-119' (H2AK119ub), and promotes the displacement of the polycomb PRC1 complex from chromatin, thereby facilitating transcription activation. In Macaca fascicularis (Crab-eating macaque), this protein is DnaJ homolog subfamily C member 2 (DNAJC2).